Here is a 429-residue protein sequence, read N- to C-terminus: MVKLHIGIDDTDSPKGMCTTYLGALLYREISKIAEPLDLPKLIRLNPNVPYKTRGNGAVAMSFDAREEDILKIKNLVLEMVKKLSEFSHQNTNPGVVFIEGDIPEKLERFAYKAIWEHLNITDAENIAEELNAEIHKFRLGRGIIGALAAIGHPLKVFTYELLAYRTREFWGTARKVNKESVFAVDHLTYPFTYDNVDLSKGSVLITPHGKDPVLVGIRGIDKNKVIWAFENITFEEPIDFFQIYKTNQNTDDHLRFKKIAELKPLDSAIVRGKVIKKYWEKGRHVFFEISDDTGKLRVAAFEPTKGFRKYVRMLIEGDEIIAAGGVKEFNGVLTLNLEKFYPIKLTEKITYEKPKCPKCKGTMKSKGEYLKCKKCGYKMKKVLIPKRIPRDLKRKIYEVPPDARKHLSRPLVLPMAENKILDVLKLKR.

The OB DNA-binding region spans 271–343 (VRGKVIKKYW…LTLNLEKFYP (73 aa)).

Belongs to the TiaS family.

The protein localises to the cytoplasm. It carries out the reaction cytidine(34) in tRNA(Ile2) + agmatine + ATP + H2O = 2-agmatinylcytidine(34) in tRNA(Ile2) + AMP + 2 phosphate + 2 H(+). Its function is as follows. ATP-dependent agmatine transferase that catalyzes the formation of 2-agmatinylcytidine (agm2C) at the wobble position (C34) of tRNA(Ile2), converting the codon specificity from AUG to AUA. The protein is tRNA(Ile2) 2-agmatinylcytidine synthetase TiaS of Thermococcus sibiricus (strain DSM 12597 / MM 739).